Reading from the N-terminus, the 344-residue chain is Lysophosphatidic acid receptor 6 (344 aa).

The Extracellular portion of the chain corresponds to 1-25 (MVSSNGSQCPYDDSFKYTLYGCMFS). N-linked (GlcNAc...) asparagine glycosylation occurs at asparagine 5. A helical transmembrane segment spans residues 26–46 (MVFVLGLISNCVAIYIFICAL). The Cytoplasmic portion of the chain corresponds to 47–56 (KVRNETTTYM). A helical transmembrane segment spans residues 57 to 77 (INLAMSDLLFVFTLPFRIFYF). The Extracellular portion of the chain corresponds to 78-90 (ATRNWPFGDLLCK). An intrachain disulfide couples cysteine 89 to cysteine 168. Residues 91–111 (ISVMLFYTNMYGSILFLTCIS) form a helical membrane-spanning segment. Residues 112 to 134 (VDRFLAIVYPFKSKTLRTKRNAK) are Cytoplasmic-facing. Residues 135–155 (IVCIAVWFTVMGGSAPAVFFQ) traverse the membrane as a helical segment. The Extracellular portion of the chain corresponds to 156 to 183 (STHSQGNNTSEACFENFPAATWKTYLSR). N-linked (GlcNAc...) asparagine glycans are attached at residues asparagine 162 and asparagine 163. The helical transmembrane segment at 184 to 204 (IVIFIEIVGFFIPLILNVTCS) threads the bilayer. Residues 205–230 (SMVLRTLNKPVTLSRSKMNKTKVLKM) are Cytoplasmic-facing. A helical transmembrane segment spans residues 231–251 (IFVHLVIFCFCFVPYNINLIL). Residues 252-272 (YSLMRTQTFVNCSVVAAVRTM) are Extracellular-facing. Asparagine 262 carries N-linked (GlcNAc...) asparagine glycosylation. Residues 273–293 (YPITLCIAVSNCCFDPIVYYF) form a helical membrane-spanning segment. Cysteine 284 carries the S-palmitoyl cysteine lipid modification. The Cytoplasmic segment spans residues 294–344 (TSDTIQNSIKMKNWSVRRSDSRFSEVQGTENFIQHNLQTLKNKIFDNESAI).

Belongs to the G-protein coupled receptor 1 family. In terms of tissue distribution, ubiquitously expressed. Detected in the hair follicles and skin (at protein level).

The protein localises to the cell membrane. Its function is as follows. Binds to oleoyl-L-alpha-lysophosphatidic acid (LPA). Intracellular cAMP is involved in the receptor activation. Important for the maintenance of hair growth and texture. This is Lysophosphatidic acid receptor 6 (Lpar6) from Mus musculus (Mouse).